The primary structure comprises 492 residues: Linolenate hydroperoxide lyase, chloroplastic (492 aa).

Residues 1-33 are disordered; the sequence is MLLRTMAATSPRPPPSTSLTSQQPPSPPSQLPL. The transit peptide at 1-34 directs the protein to the chloroplast; the sequence is MLLRTMAATSPRPPPSTSLTSQQPPSPPSQLPLR. Cysteine 454 lines the heme pocket.

It belongs to the cytochrome P450 family. It depends on heme as a cofactor. In terms of tissue distribution, expressed in roots, leaves, flowers and siliques.

It is found in the plastid. The protein localises to the chloroplast. Its function is as follows. Catalyzes the conversion of (9Z,11E,15Z)-(13S)-hydroperoxyoctadeca-9,11,15-trienoate to (9Z)-12-oxo-dodec-9-enoate and cis-3-hexenal. Possesses low activity toward (9Z,11E)-(13S)-13-hydroperoxyoctadeca-9,11-dienoate. Required for the synthesis of the green leaf volatiles (GLVs) hexanal and trans-2-hexenal. The sequence is that of Linolenate hydroperoxide lyase, chloroplastic from Arabidopsis thaliana (Mouse-ear cress).